A 185-amino-acid chain; its full sequence is NEDD8-conjugating enzyme UBE2F (185 aa).

Met1 is subject to N-acetylmethionine. The 154-residue stretch at 32–185 (VRDKLLVKEV…VDEYIKRYAR (154 aa)) folds into the UBC core domain. Catalysis depends on Cys116, which acts as the Glycyl thioester intermediate.

The protein belongs to the ubiquitin-conjugating enzyme family. UBE2F subfamily. As to quaternary structure, interacts with UBA3 and RBX2. Interacts (N-terminally acetylated form) with (via DCUN1 domain) DCUN1D1, DCUN1D2, DCUN1D3, DCUN1D4 and DCUN1D5. The acetylation of Met-1 increases affinity for DCUN1D3 by about 2 orders of magnitude and is crucial for NEDD8 transfer to cullins.

It carries out the reaction [E1 NEDD8-activating enzyme]-S-[NEDD8 protein]-yl-L-cysteine + [E2 NEDD8-conjugating enzyme]-L-cysteine = [E1 NEDD8-activating enzyme]-L-cysteine + [E2 NEDD8-conjugating enzyme]-S-[NEDD8-protein]-yl-L-cysteine.. Its pathway is protein modification; protein neddylation. In terms of biological role, accepts the ubiquitin-like protein NEDD8 from the UBA3-NAE1 E1 complex and catalyzes its covalent attachment to other proteins. Together with the E3 ubiquitin ligase RNF7/RBX2, specifically neddylates cullin-5 (CUL5). Does not neddylate CUL1, CUL2, CUL3, CUL4A or CUL4B. Mediates neddylation of the CUL9-RBX1 complex. The sequence is that of NEDD8-conjugating enzyme UBE2F (Ube2f) from Rattus norvegicus (Rat).